Here is a 304-residue protein sequence, read N- to C-terminus: MKIKIAARGSKLSLKQVSMFTSYLLKFFPDLEYEVITVKTTGDKANAPFEELAKRGLTGLFEKEVNKAVLEGKADVAVHSLKDLPTELDPRLEIAAFLPRDPPYDVLISRAGNYDIFDLPKGSVVGTSSARRKALIKNLRPDLVVKDLRGNVDTRLEKLRRGEYDAIVLAEAGVSRLGLNVDYVRLDWRLFPPSPGQGIIVAVTRKGSEISDLLKSISDVKSEKLATAERTVLKEFGGGCFVALGAIAFEEGSLIRLRATVLSPSGRERVDVELIGKGPEEVGMRAAERLKALNPMKTTVGSEE.

Cysteine 240 carries the post-translational modification S-(dipyrrolylmethanemethyl)cysteine.

Belongs to the HMBS family. Requires dipyrromethane as cofactor.

It catalyses the reaction 4 porphobilinogen + H2O = hydroxymethylbilane + 4 NH4(+). The protein operates within porphyrin-containing compound metabolism; protoporphyrin-IX biosynthesis; coproporphyrinogen-III from 5-aminolevulinate: step 2/4. Tetrapolymerization of the monopyrrole PBG into the hydroxymethylbilane pre-uroporphyrinogen in several discrete steps. The protein is Probable porphobilinogen deaminase of Ignicoccus hospitalis (strain KIN4/I / DSM 18386 / JCM 14125).